The primary structure comprises 440 residues: Ribosomal protein uS12 methylthiotransferase RimO (440 aa).

The 112-residue stretch at 5 to 116 (PTIAISHLGC…IVNVIERAEQ (112 aa)) folds into the MTTase N-terminal domain. Residues cysteine 14, cysteine 50, cysteine 79, cysteine 154, cysteine 158, and cysteine 161 each contribute to the [4Fe-4S] cluster site. The region spanning 140–370 (TTTEGVAYLR…ALQQPISWRK (231 aa)) is the Radical SAM core domain. The TRAM domain occupies 372–438 (QQEVGKTVEV…EYDLFGQVVS (67 aa)).

It belongs to the methylthiotransferase family. RimO subfamily. Requires [4Fe-4S] cluster as cofactor.

It is found in the cytoplasm. The catalysed reaction is L-aspartate(89)-[ribosomal protein uS12]-hydrogen + (sulfur carrier)-SH + AH2 + 2 S-adenosyl-L-methionine = 3-methylsulfanyl-L-aspartate(89)-[ribosomal protein uS12]-hydrogen + (sulfur carrier)-H + 5'-deoxyadenosine + L-methionine + A + S-adenosyl-L-homocysteine + 2 H(+). Its function is as follows. Catalyzes the methylthiolation of an aspartic acid residue of ribosomal protein uS12. The polypeptide is Ribosomal protein uS12 methylthiotransferase RimO (Trichormus variabilis (strain ATCC 29413 / PCC 7937) (Anabaena variabilis)).